Consider the following 485-residue polypeptide: D-alanine--D-alanyl carrier protein ligase (485 aa).

Thr-144–Ser-145 contributes to the ATP binding site. Asp-189 contacts D-alanine. Residue Asn-284–Thr-289 coordinates ATP. Val-293 provides a ligand contact to D-alanine. Asp-365 and Lys-473 together coordinate ATP. Lys-473 contacts D-alanine.

Belongs to the ATP-dependent AMP-binding enzyme family. DltA subfamily.

The protein resides in the cytoplasm. It carries out the reaction holo-[D-alanyl-carrier protein] + D-alanine + ATP = D-alanyl-[D-alanyl-carrier protein] + AMP + diphosphate. The protein operates within cell wall biogenesis; lipoteichoic acid biosynthesis. Its function is as follows. Catalyzes the first step in the D-alanylation of lipoteichoic acid (LTA), the activation of D-alanine and its transfer onto the D-alanyl carrier protein (Dcp) DltC. In an ATP-dependent two-step reaction, forms a high energy D-alanyl-AMP intermediate, followed by transfer of the D-alanyl residue as a thiol ester to the phosphopantheinyl prosthetic group of the Dcp. D-alanylation of LTA plays an important role in modulating the properties of the cell wall in Gram-positive bacteria, influencing the net charge of the cell wall. This Staphylococcus aureus (strain USA300) protein is D-alanine--D-alanyl carrier protein ligase.